Consider the following 303-residue polypeptide: MGEIFSEQSLNVQTVSDGVTASTTAQANGVSVGVTNADAAVTSNQDNQGVVYGHSVVDVAASAGASSAVRTTAVGNAAALSASNGTISAFAVQTNSAGVTARGQVEAATAEAADLTVSTLAMGNSAGVTLDNGSAGARISQSTTANVLADGGAIVGYVSGTSAVTATTAGNNINVTGANQSAVRAITDQANTADVTQASKFTAYGNSYMTATAATATGNNLAVSNDGPLADVAAHQWNTSYVRGQAEGTSYLFGAAQTTAYAAGNSARSTMSGPKSCSTTFRPIRAAASRRPPASAGTRAMTR.

The span at 266–281 shows a compositional bias: polar residues; the sequence is SARSTMSGPKSCSTTF. The tract at residues 266-303 is disordered; the sequence is SARSTMSGPKSCSTTFRPIRAAASRRPPASAGTRAMTR. Over residues 282–303 the composition is skewed to low complexity; sequence RPIRAAASRRPPASAGTRAMTR.

The protein resides in the cell outer membrane. Its function is as follows. Involved in attachment of the holdfast to the cell. The holdfast is a structure that allows the bacteria to firmly adhere to surfaces. The sequence is that of Holdfast attachment protein D (hfaD) from Caulobacter vibrioides (strain ATCC 19089 / CIP 103742 / CB 15) (Caulobacter crescentus).